Consider the following 519-residue polypeptide: MAQTETQEKKGLGRKVQAFGSFLSSMIMPNIGAFIAWGFIAAIFIDNGWYPNKELSQLAGPMITYLIPLLIAFSGGRLIHDLRGGIVAATATMGVIVALPDTPMLLGAMIMGPLVGWLMKKVDQFLQPRTPQGFEMLFNNFSAGILAFIMTILGFKLLAPIMQFIMHILSVAVEFLVHLHLLPIVSIIVEPAKILFLNNAINHGVFTPLGTDQAASAGQSILFAIESNPGPGIGILLAYMIFGKGTAKATSYGAGIIHFFGGIHEIYFPYVLMRPLLFIAVILGGMTGVATYQATGFGFKSPASPGSFIVYCLNAPKGEFLHMVLGVFLAALVSFVVAALIMKFTKEPKQDLEAATAKMESTKGKKSSVSSKLTGATTGTGAAGVAANKANGEDQNEASSEDEEEDLLDNYNTEDVDAHDYSNVDHVIFACDAGMGSSAMGASMLRNKFKKAGISDVNVTNTAINQLPNNAQLVITQKTLTDRAIKQVPNAIHISVDNFLNSPRYEELLNNLKKDQDKA.

At 1–30 the chain is on the cytoplasmic side; the sequence is MAQTETQEKKGLGRKVQAFGSFLSSMIMPN. Residues 19–351 form the PTS EIIC type-2 domain; that stretch reads FGSFLSSMIM…MKFTKEPKQD (333 aa). The chain crosses the membrane as a helical span at residues 31–52; the sequence is IGAFIAWGFIAAIFIDNGWYPN. Residues 53-56 are Extracellular-facing; the sequence is KELS. A helical transmembrane segment spans residues 57–77; the sequence is QLAGPMITYLIPLLIAFSGGR. The Cytoplasmic segment spans residues 78–141; that stretch reads LIHDLRGGIV…QGFEMLFNNF (64 aa). Residues 142-163 traverse the membrane as a helical segment; the sequence is SAGILAFIMTILGFKLLAPIMQ. Topologically, residues 164–172 are extracellular; it reads FIMHILSVA. Residues 173–193 traverse the membrane as a helical segment; the sequence is VEFLVHLHLLPIVSIIVEPAK. Residues 194-280 lie on the Cytoplasmic side of the membrane; it reads ILFLNNAINH…VLMRPLLFIA (87 aa). Residues 281-300 form a helical membrane-spanning segment; it reads VILGGMTGVATYQATGFGFK. At 301-320 the chain is on the extracellular side; it reads SPASPGSFIVYCLNAPKGEF. The chain crosses the membrane as a helical span at residues 321–342; the sequence is LHMVLGVFLAALVSFVVAALIM. Over 343–519 the chain is Cytoplasmic; that stretch reads KFTKEPKQDL…NNLKKDQDKA (177 aa). The segment at 366–406 is disordered; that stretch reads KSSVSSKLTGATTGTGAAGVAANKANGEDQNEASSEDEEED. Positions 367-387 are enriched in low complexity; sequence SSVSSKLTGATTGTGAAGVAA. Residues 394–406 are compositionally biased toward acidic residues; it reads DQNEASSEDEEED. One can recognise a PTS EIIB type-2 domain in the interval 425 to 519; it reads DHVIFACDAG…NNLKKDQDKA (95 aa). Catalysis depends on Cys-431, which acts as the Phosphocysteine intermediate; for EIIB activity. The residue at position 431 (Cys-431) is a Phosphocysteine; by EIIA.

In terms of assembly, homodimer.

The protein localises to the cell membrane. The enzyme catalyses D-mannitol(out) + N(pros)-phospho-L-histidyl-[protein] = D-mannitol 1-phosphate(in) + L-histidyl-[protein]. Functionally, the phosphoenolpyruvate-dependent sugar phosphotransferase system (sugar PTS), a major carbohydrate active transport system, catalyzes the phosphorylation of incoming sugar substrates concomitantly with their translocation across the cell membrane. The enzyme II CmtAB PTS system is involved in D-mannitol transport. The sequence is that of PTS system mannitol-specific EIICB component (mtlA) from Staphylococcus haemolyticus (strain JCSC1435).